Reading from the N-terminus, the 3801-residue chain is Lysosomal-trafficking regulator (3801 aa).

Residues 148-173 (KITHRYSVRDARKTQLSTSDSEANSD) are disordered. At Ser164 the chain carries Phosphoserine. Thr165 bears the Phosphothreonine mark. Ser166 is modified (phosphoserine). A WD 1 repeat occupies 662–700 (ELSSSLSSPSYRFQGILPSSGSEDLLWKWDALKAYQNFV). Over residues 1181-1190 (AMTEKSHQSA) the composition is skewed to basic and acidic residues. Disordered regions lie at residues 1181-1203 (AMTE…FSEE) and 1221-1256 (YEAD…SPND). Over residues 1221-1238 (YEADSESNPEDGETQDDG) the composition is skewed to acidic residues. The span at 1246 to 1256 (EGFSASSSPND) shows a compositional bias: polar residues. Phosphoserine occurs at positions 1509 and 1510. Residues 1582–1626 (SQENIFLPSKWQHLVLTYLQQPQGKRRIHGKISIWVSGQRKPDVT) form a WD 2 repeat. Phosphoserine occurs at positions 2105, 2124, 2213, 2217, and 2264. The span at 2205 to 2215 (KQLGAEPRSED) shows a compositional bias: basic and acidic residues. Positions 2205–2224 (KQLGAEPRSEDDSPGDESCP) are disordered. Positions 3009–3115 (AASESIRVNR…VRDDVYHNIL (107 aa)) constitute a BEACH-type PH domain. The region spanning 3120–3422 (PNLLEYGNIT…QLFHMAHVSR (303 aa)) is the BEACH domain. WD repeat units lie at residues 3563–3602 (SQQY…STPS), 3614–3653 (GHTE…YVQS), 3656–3699 (GHKS…VGHV), 3700–3744 (HCRE…PVRE), and 3749–3788 (KSNK…RLKQ).

As to quaternary structure, interacts with CPAP, LIP8 and ZNF521. As to expression, abundantly expressed in adult and fetal thymus, peripheral blood leukocytes, bone marrow and several regions of the adult brain.

Its subcellular location is the cytoplasm. Adapter protein that regulates and/or fission of intracellular vesicles such as lysosomes. Might regulate trafficking of effectors involved in exocytosis. In cytotoxic T-cells and natural killer (NK) cells, has role in the regulation of size, number and exocytosis of lytic granules. In macrophages and dendritic cells, regulates phagosome maturation by controlling the conversion of early phagosomal compartments into late phagosomes. In macrophages and dendritic cells, specifically involved in TLR3- and TLR4-induced production of pro-inflammatory cytokines by regulating the endosomal TLR3- TICAM1/TRIF and TLR4- TICAM1/TRIF signaling pathways. In Homo sapiens (Human), this protein is Lysosomal-trafficking regulator (LYST).